Consider the following 853-residue polypeptide: DNA mismatch repair protein MutS (853 aa).

614–621 is an ATP binding site; sequence GPNMGGKS.

It belongs to the DNA mismatch repair MutS family.

Its function is as follows. This protein is involved in the repair of mismatches in DNA. It is possible that it carries out the mismatch recognition step. This protein has a weak ATPase activity. This chain is DNA mismatch repair protein MutS, found in Escherichia coli O6:H1 (strain CFT073 / ATCC 700928 / UPEC).